The primary structure comprises 709 residues: DNA ligase (709 aa).

Residues 34–38 (DAEYD), 83–84 (SL), and Glu-115 contribute to the NAD(+) site. The active-site N6-AMP-lysine intermediate is Lys-117. 4 residues coordinate NAD(+): Arg-138, Glu-185, Lys-301, and Lys-325. Zn(2+)-binding residues include Cys-419, Cys-422, Cys-437, and Cys-443. A BRCT domain is found at 602–691 (RQSDTLAGKT…AEPPPSPPPP (90 aa)). Residues 679-709 (GTTAEPPPSPPPPPPETNTDGNQLLLPLDGE) form a disordered region. The span at 683-694 (EPPPSPPPPPPE) shows a compositional bias: pro residues.

It belongs to the NAD-dependent DNA ligase family. LigA subfamily. Requires Mg(2+) as cofactor. The cofactor is Mn(2+).

It carries out the reaction NAD(+) + (deoxyribonucleotide)n-3'-hydroxyl + 5'-phospho-(deoxyribonucleotide)m = (deoxyribonucleotide)n+m + AMP + beta-nicotinamide D-nucleotide.. Its function is as follows. DNA ligase that catalyzes the formation of phosphodiester linkages between 5'-phosphoryl and 3'-hydroxyl groups in double-stranded DNA using NAD as a coenzyme and as the energy source for the reaction. It is essential for DNA replication and repair of damaged DNA. This chain is DNA ligase, found in Chloroflexus aurantiacus (strain ATCC 29364 / DSM 637 / Y-400-fl).